A 247-amino-acid polypeptide reads, in one-letter code: UPF0246 protein LSL_1719 (247 aa).

Belongs to the UPF0246 family.

This is UPF0246 protein LSL_1719 from Ligilactobacillus salivarius (strain UCC118) (Lactobacillus salivarius).